A 50-amino-acid polypeptide reads, in one-letter code: Large ribosomal subunit protein bL33B (50 aa).

This sequence belongs to the bacterial ribosomal protein bL33 family.

The polypeptide is Large ribosomal subunit protein bL33B (Streptococcus pneumoniae (strain ATCC BAA-255 / R6)).